A 1842-amino-acid chain; its full sequence is Plexin-B2 (1842 aa).

The signal sequence occupies residues 1-19 (MALPLWALTFLGLTGLGLS). The Sema domain maps to 20–468 (LRSRKPESFR…TQDKVFRLPV (449 aa)). Residues 20 to 1201 (LRSRKPESFR…EYDTRASDVP (1182 aa)) are Extracellular-facing. Disulfide bonds link Cys78-Cys87 and Cys112-Cys120. N-linked (GlcNAc...) asparagine glycosylation is found at Asn127 and Asn242. 3 cysteine pairs are disulfide-bonded: Cys250-Cys366, Cys266-Cys313, and Cys331-Cys353. 2 N-linked (GlcNAc...) asparagine glycosylation sites follow: Asn393 and Asn451. 5 disulfide bridges follow: Cys471/Cys488, Cys477/Cys520, Cys480/Cys497, Cys491/Cys503, and Cys557/Cys576. A glycan (N-linked (GlcNAc...) asparagine) is linked at Asn798. IPT/TIG domains are found at residues 806 to 895 (PVIT…QFTY), 898 to 982 (PQPL…SFTY), and 986 to 1095 (PMIR…VFEY). Residues Asn919, Asn1053, and Asn1072 are each glycosylated (N-linked (GlcNAc...) asparagine). Residues 1202–1222 (LSLILPLVMVPMVFIIVVSIY) traverse the membrane as a helical segment. Residues 1223-1842 (CYWRKSQQAE…AALENKVTDL (620 aa)) lie on the Cytoplasmic side of the membrane. Phosphoserine occurs at positions 1240, 1248, and 1574.

It belongs to the plexin family. Monomer, and heterodimer with PLXNB1. Interacts with MET, ARHGEF11 and ARHGEF12. May also interact with MST1R. As to expression, detected in macrophages from spleen and bone marrow (at protein level). Detected in granule cells in the developing cerebellum, dentate gyrus and olfactory bulb. Expressed in neurons and glia in the developing hippocampus.

The protein resides in the cell membrane. In terms of biological role, cell surface receptor for SEMA4C, SEMA4D and SEMA4G that plays an important role in cell-cell signaling. Plays a role in glutamatergic synapse development and is required for SEMA4A-mediated excitatory synapse development. Binding to class 4 semaphorins promotes downstream activation of RHOA and phosphorylation of ERBB2 at 'Tyr-1248'. Also acts as a cell surface receptor for angiogenin (ANG); promoting ANG endocytosis and translocation to the cytoplasm or nucleus. Required for normal differentiation and migration of neuronal cells during brain corticogenesis and for normal embryonic brain development. Regulates the migration of cerebellar granule cells in the developing brain. Plays a role in RHOA activation and subsequent changes of the actin cytoskeleton. Plays a role in axon guidance, invasive growth and cell migration. May modulate the activity of RAC1 and CDC42. Down-regulates macrophage migration in wound-healing assays (in vitro). In Mus musculus (Mouse), this protein is Plexin-B2.